The chain runs to 307 residues: Methionyl-tRNA formyltransferase (307 aa).

108 to 111 (SLLP) lines the (6S)-5,6,7,8-tetrahydrofolate pocket.

It belongs to the Fmt family.

It catalyses the reaction L-methionyl-tRNA(fMet) + (6R)-10-formyltetrahydrofolate = N-formyl-L-methionyl-tRNA(fMet) + (6S)-5,6,7,8-tetrahydrofolate + H(+). Its function is as follows. Attaches a formyl group to the free amino group of methionyl-tRNA(fMet). The formyl group appears to play a dual role in the initiator identity of N-formylmethionyl-tRNA by promoting its recognition by IF2 and preventing the misappropriation of this tRNA by the elongation apparatus. In Xanthomonas euvesicatoria pv. vesicatoria (strain 85-10) (Xanthomonas campestris pv. vesicatoria), this protein is Methionyl-tRNA formyltransferase.